Consider the following 269-residue polypeptide: Shikimate dehydrogenase (NADP(+)) (269 aa).

Shikimate is bound by residues 22–24 (TLS) and Thr68. Lys72 functions as the Proton acceptor in the catalytic mechanism. Positions 93 and 104 each coordinate shikimate. NADP(+)-binding positions include 128 to 132 (GAGGA), 152 to 157 (NRTNLR), and Phe210. Tyr212 contributes to the shikimate binding site. Residue Gly233 participates in NADP(+) binding.

This sequence belongs to the shikimate dehydrogenase family. Homodimer.

It catalyses the reaction shikimate + NADP(+) = 3-dehydroshikimate + NADPH + H(+). Its pathway is metabolic intermediate biosynthesis; chorismate biosynthesis; chorismate from D-erythrose 4-phosphate and phosphoenolpyruvate: step 4/7. Its function is as follows. Involved in the biosynthesis of the chorismate, which leads to the biosynthesis of aromatic amino acids. Catalyzes the reversible NADPH linked reduction of 3-dehydroshikimate (DHSA) to yield shikimate (SA). The protein is Shikimate dehydrogenase (NADP(+)) of Saccharolobus islandicus (strain Y.N.15.51 / Yellowstone #2) (Sulfolobus islandicus).